The primary structure comprises 368 residues: CST complex subunit STN1 (368 aa).

An interaction with CTC1 region spans residues 1–185 (MQPGSSRCEE…KIYDQPFRSS (185 aa)). The segment at residues 57–155 (VDVLGTVVGV…EIHATAYYKV (99 aa)) is a DNA-binding region (OB). 2 winged helix-turn-helix (wHTH) regions span residues 191 to 295 (EALS…YVTR) and 296 to 368 (EDKD…YTAF).

The protein belongs to the STN1 family. As to quaternary structure, component of the CST complex, composed of TEN1/C17orf106, CTC1/C17orf68 and STN1; in the complex interacts directly with TEN1 and CTC1. Interacts with ACD/TPP1, POT1 and POLA1.

Its subcellular location is the nucleus. It localises to the chromosome. The protein localises to the telomere. In terms of biological role, component of the CST complex proposed to act as a specialized replication factor promoting DNA replication under conditions of replication stress or natural replication barriers such as the telomere duplex. The CST complex binds single-stranded DNA with high affinity in a sequence-independent manner, while isolated subunits bind DNA with low affinity by themselves. Initially the CST complex has been proposed to protect telomeres from DNA degradation. However, the CST complex has been shown to be involved in several aspects of telomere replication. The CST complex inhibits telomerase and is involved in telomere length homeostasis; it is proposed to bind to newly telomerase-synthesized 3' overhangs and to terminate telomerase action implicating the association with the ACD:POT1 complex thus interfering with its telomerase stimulation activity. The CST complex is also proposed to be involved in fill-in synthesis of the telomeric C-strand probably implicating recruitment and activation of DNA polymerase alpha. The CST complex facilitates recovery from many forms of exogenous DNA damage; seems to be involved in the re-initiation of DNA replication at repaired forks and/or dormant origins. Required for efficicient replication of the duplex region of the telomere. Promotes efficient replication of lagging-strand telomeres. Promotes general replication start following replication-fork stalling implicating new origin firing. May be in involved in C-strand fill-in during late S/G2 phase independent of its role in telomere duplex replication. The sequence is that of CST complex subunit STN1 from Macaca fascicularis (Crab-eating macaque).